The primary structure comprises 150 residues: Large ribosomal subunit protein bL9 (150 aa).

The protein belongs to the bacterial ribosomal protein bL9 family.

Its function is as follows. Binds to the 23S rRNA. In Corynebacterium glutamicum (strain ATCC 13032 / DSM 20300 / JCM 1318 / BCRC 11384 / CCUG 27702 / LMG 3730 / NBRC 12168 / NCIMB 10025 / NRRL B-2784 / 534), this protein is Large ribosomal subunit protein bL9.